The primary structure comprises 32 residues: Natriuretic peptide Coa_NP1 (32 aa).

A disulfide bond links Cys8 and Cys24.

The protein belongs to the natriuretic peptide family. Snake NP subfamily. Expressed by the venom gland.

It localises to the secreted. In terms of biological role, snake venom natriuretic peptide that exhibits hypotensive and vasodepressor activity in rats. The chain is Natriuretic peptide Coa_NP1 from Crotalus lutosus abyssus (Grand Canyon rattlesnake).